The chain runs to 45 residues: uncharacterized protein (45 aa).

This is an uncharacterized protein from Methanocaldococcus jannaschii (strain ATCC 43067 / DSM 2661 / JAL-1 / JCM 10045 / NBRC 100440) (Methanococcus jannaschii).